The sequence spans 112 residues: Replication initiation control protein YabA (112 aa).

Residues histidine 85, cysteine 87, cysteine 101, and cysteine 104 each contribute to the Zn(2+) site.

It belongs to the YabA family. In terms of assembly, homotetramer. Interacts with both DnaA and DnaN, acting as a bridge between these two proteins. It depends on Zn(2+) as a cofactor.

The protein localises to the cytoplasm. The protein resides in the nucleoid. In terms of biological role, involved in control of chromosome replication initiation. Inhibits the cooperative binding of DnaA to the oriC region, thus negatively regulating initiation of chromosome replication. Inhibits the ability of DnaA-ATP to form a helix on DNA; does not disassemble preformed DnaA-DNA helices. Decreases the residence time of DnaA on the chromosome at its binding sites (oriC, replication forks and promoter-binding sites). Tethers DnaA to the replication machinery via the DNA polymerase beta sliding clamp subunit (dnaN). Associates with oriC and other DnaA targets on the chromosome in a DnaA-dependent manner. The chain is Replication initiation control protein YabA from Lacticaseibacillus casei (strain BL23) (Lactobacillus casei).